Reading from the N-terminus, the 146-residue chain is D-aminoacyl-tRNA deacylase (146 aa).

The Gly-cisPro motif, important for rejection of L-amino acids motif lies at 137–138 (GP).

Belongs to the DTD family. In terms of assembly, homodimer.

It localises to the cytoplasm. It carries out the reaction glycyl-tRNA(Ala) + H2O = tRNA(Ala) + glycine + H(+). It catalyses the reaction a D-aminoacyl-tRNA + H2O = a tRNA + a D-alpha-amino acid + H(+). Functionally, an aminoacyl-tRNA editing enzyme that deacylates mischarged D-aminoacyl-tRNAs. Also deacylates mischarged glycyl-tRNA(Ala), protecting cells against glycine mischarging by AlaRS. Acts via tRNA-based rather than protein-based catalysis; rejects L-amino acids rather than detecting D-amino acids in the active site. By recycling D-aminoacyl-tRNA to D-amino acids and free tRNA molecules, this enzyme counteracts the toxicity associated with the formation of D-aminoacyl-tRNA entities in vivo and helps enforce protein L-homochirality. This Desulfatibacillum aliphaticivorans protein is D-aminoacyl-tRNA deacylase.